Reading from the N-terminus, the 441-residue chain is Nuclear distribution protein nudF (441 aa).

Residues 9-41 enclose the LisH domain; that stretch reads QAEELHKSIIAYLASVNLTESSAALRAELGDSV. WD repeat units lie at residues 87-128, 130-170, 174-221, 224-263, 266-326, 328-367, 372-402, and 403-440; these read GHRE…RTVK, HTKA…KNIR, GHDH…CVKT, GHVDWVRAVAPSLDGRFLFAAGDDRIPRLWDLSSAETKST, GHEH…IKTL, GHDNWVRALAFHPGGKHLLSVADDKTIRCWDLTQECKCVR, AHGHFVTCLRWAPPLIKDGGANGESETNGAP, and AATATTNGVRPDPNAANKISIRCVIATGSVDRKVRIFA. Residues 390-415 form a disordered region; it reads GGANGESETNGAPAATATTNGVRPDP. Positions 398–410 are enriched in low complexity; that stretch reads TNGAPAATATTNG.

The protein belongs to the WD repeat LIS1/nudF family. As to quaternary structure, self-associates. Interacts with nudE and dynein.

It is found in the cytoplasm. Its subcellular location is the cytoskeleton. The protein resides in the spindle pole. Its function is as follows. Positively regulates the activity of the minus-end directed microtubule motor protein dynein. May enhance dynein-mediated microtubule sliding by targeting dynein to the microtubule plus end. Required for nuclear migration during vegetative growth as well as development. Required for retrograde early endosome (EE) transport from the hyphal tip. Required for localization of dynein to the mitotic spindle poles. Recruits additional proteins to the dynein complex at SPBs. This is Nuclear distribution protein nudF from Neosartorya fischeri (strain ATCC 1020 / DSM 3700 / CBS 544.65 / FGSC A1164 / JCM 1740 / NRRL 181 / WB 181) (Aspergillus fischerianus).